An 82-amino-acid polypeptide reads, in one-letter code: MVFLLCFFLVADVSYGINGDCELPKVVGPCRARFPRYYYNSSSKRCEKFIYGGCRGNANNFHTLEECEKVCGVRSRDSPKEN.

Residues 1-16 (MVFLLCFFLVADVSYG) form the signal peptide. Residues 21 to 71 (CELPKVVGPCRARFPRYYYNSSSKRCEKFIYGGCRGNANNFHTLEECEKVC) enclose the BPTI/Kunitz inhibitor domain. Cystine bridges form between Cys-21/Cys-71, Cys-30/Cys-54, and Cys-46/Cys-67. Positions 76 to 82 (RDSPKEN) are excised as a propeptide.

The protein belongs to the venom Kunitz-type family. Sea anemone type 2 potassium channel toxin subfamily.

Its subcellular location is the secreted. The protein localises to the nematocyst. Dual-function toxin that inhibits both the serine protease trypsin (Kd=30 nM) and voltage-gated potassium channels Kv1.2/KCNA2 (IC(50)=2800 nM). The protein is U-actitoxin-Avd3h of Anemonia viridis (Snakelocks anemone).